Consider the following 1000-residue polypeptide: SEC23-interacting protein (1000 aa).

Residues 1-367 (MAERKPNGGS…YTEEFSEKLE (367 aa)) are interaction with SEC23A. The segment at 133–252 (FSPSISKAQP…QQVPARPGAP (120 aa)) is disordered. Low complexity predominate over residues 154–167 (SYLPSQPSSLPPSY). Positions 207–218 (PGPPAHPPPSGP) are enriched in pro residues. The segment covering 235 to 246 (SSVQSPAQQQVP) has biased composition (low complexity). The 64-residue stretch at 644-707 (KEVLTLQETL…NFVEHKAAKL (64 aa)) folds into the SAM domain. The disordered stretch occupies residues 716 to 748 (AVAATSTKGQEQSAQKTKDMASLPSESNEPKRK). Phosphoserine is present on residues serine 737 and serine 926. Residues 779–989 (LDFEPEIFFA…ALLLLKEIYR (211 aa)) enclose the DDHD domain.

Belongs to the PA-PLA1 family. As to quaternary structure, interacts with SEC23A. Ubiquitously expressed with stronger levels detected in heart, liver and skeletal muscle.

The protein localises to the cytoplasmic vesicle. The protein resides in the COPII-coated vesicle membrane. Its subcellular location is the endoplasmic reticulum. Functionally, plays a role in the organization of endoplasmic reticulum exit sites. Specifically binds to phosphatidylinositol 3-phosphate (PI(3)P), phosphatidylinositol 4-phosphate (PI(4)P) and phosphatidylinositol 5-phosphate (PI(5)P). The chain is SEC23-interacting protein (SEC23IP) from Homo sapiens (Human).